A 325-amino-acid polypeptide reads, in one-letter code: Natural cytotoxicity triggering receptor 1 (325 aa).

The first 16 residues, 1-16 (MLPTLTALLCLGLCLS), serve as a signal peptide directing secretion. Residues 17–255 (QRINTEKETL…SAFWDHTTQN (239 aa)) are Extracellular-facing. Ig-like domains follow at residues 34-118 (KPSI…LVVT) and 129-211 (YPRP…LLIT). The cysteines at positions 49 and 98 are disulfide-linked. N-linked (GlcNAc...) asparagine glycosylation occurs at N139. C144 and C190 are disulfide-bonded. N-linked (GlcNAc...) asparagine glycans are attached at residues N216 and N238. Residues 256-273 (LIRIGLACIILITLVWLL) form a helical membrane-spanning segment. Residues 274-325 (TEDWLSKRKDHEEANRLTNWECRRRWRMQHYFEEEQRNAISMMELKATPGAL) are Cytoplasmic-facing.

The protein belongs to the natural cytotoxicity receptor (NCR) family. Interacts with CD3Z and FCER1G. Selectively expressed by NK cells.

The protein localises to the cell membrane. Its function is as follows. Cytotoxicity-activating receptor that may contribute to the increased efficiency of activated natural killer (NK) cells to mediate tumor cell lysis. This is Natural cytotoxicity triggering receptor 1 (Ncr1) from Mus musculus (Mouse).